The chain runs to 471 residues: Adenosylhomocysteinase (471 aa).

Residues threonine 60, aspartate 135, and glutamate 196 each contribute to the substrate site. An NAD(+)-binding site is contributed by 197 to 199 (TTT). Substrate contacts are provided by lysine 226 and aspartate 230. Residues asparagine 231, 260–265 (GYGDVG), glutamate 283, asparagine 318, 339–341 (IGH), and asparagine 387 contribute to the NAD(+) site.

The protein belongs to the adenosylhomocysteinase family. It depends on NAD(+) as a cofactor.

It is found in the cytoplasm. The catalysed reaction is S-adenosyl-L-homocysteine + H2O = L-homocysteine + adenosine. Its pathway is amino-acid biosynthesis; L-homocysteine biosynthesis; L-homocysteine from S-adenosyl-L-homocysteine: step 1/1. Its function is as follows. May play a key role in the regulation of the intracellular concentration of adenosylhomocysteine. The protein is Adenosylhomocysteinase of Pelodictyon phaeoclathratiforme (strain DSM 5477 / BU-1).